Here is a 480-residue protein sequence, read N- to C-terminus: Zinc finger protein ztf-16 (480 aa).

Residues Asn5–His27 form a C2H2-type 1 zinc finger. Residues Glu25–His75 are disordered. Residues Ser34–Ile45 are compositionally biased toward polar residues. Residues Arg59–Ser69 show a composition bias toward pro residues. 5 consecutive C2H2-type zinc fingers follow at residues His103–His125, Tyr133–His155, Tyr161–His183, Phe190–His215, and Ala223–His246. Disordered stretches follow at residues Gln243 to Ala275, Glu290 to Pro311, and Thr376 to Glu417. Residues Thr244–Pro259 are compositionally biased toward basic and acidic residues. 2 stretches are compositionally biased toward low complexity: residues Ser292–Ser305 and Thr376–Leu403. Over residues Thr404 to Glu413 the composition is skewed to basic and acidic residues. 2 C2H2-type zinc fingers span residues Val420–His442 and Phe448–His472.

The protein belongs to the Ikaros C2H2-type zinc-finger protein family. As to expression, expressed in the somatic gonad, hypodermis and cells in the head and tail. Expressed in amphid and phasmid sheath glia, amphid and phasmid socket glia, and in neurons in the head.

It localises to the nucleus. Functionally, positively regulates the expression of ver-1 in the amphid sheath glia of amphid sensory neurons. Together with ehn-3, plays a role in somatic gonad development and is required for proper gonadal primordium assembly and somatic gonad precursor cell morphology. This is Zinc finger protein ztf-16 from Caenorhabditis elegans.